A 349-amino-acid polypeptide reads, in one-letter code: N-acetyl-gamma-glutamyl-phosphate reductase (349 aa).

C149 is an active-site residue.

It belongs to the NAGSA dehydrogenase family. Type 1 subfamily.

The protein resides in the cytoplasm. The catalysed reaction is N-acetyl-L-glutamate 5-semialdehyde + phosphate + NADP(+) = N-acetyl-L-glutamyl 5-phosphate + NADPH + H(+). Its pathway is amino-acid biosynthesis; L-arginine biosynthesis; N(2)-acetyl-L-ornithine from L-glutamate: step 3/4. Functionally, catalyzes the NADPH-dependent reduction of N-acetyl-5-glutamyl phosphate to yield N-acetyl-L-glutamate 5-semialdehyde. The protein is N-acetyl-gamma-glutamyl-phosphate reductase of Acinetobacter baumannii (strain ACICU).